The sequence spans 614 residues: WD repeat-containing protein 26 (614 aa).

2 stretches are compositionally biased toward low complexity: residues 1–19 (MQANGAAAAAAGEEPAGSG) and 34–44 (SNGVLSSNNGL). A disordered region spans residues 1-65 (MQANGAAAAA…PGGRKKKRLS (65 aa)). The LisH domain occupies 67-99 (ADEDVIRLIGQHLHGLGLNQTVDLLMQESGCRL). A CTLH domain is found at 100–184 (EHPSATKFRN…EYLEDGKVLE (85 aa)). 6 WD repeats span residues 306 to 345 (EHCNEVWFCKFSNDGTKLATGSKDTTVIIWQVDPDTHQLK), 352 to 391 (GHAYGVSYLAWSPDDNYLIACGPDDCSELWLWNVQTGELR), 397 to 437 (SHED…DSWE), 477 to 516 (QEDHPIMSFTISRNGRLALLNVATQGVHLWDLQDRVLVRK), 519 to 561 (GVTQ…PIAE), and 564 to 604 (GHTR…DNQE).

Forms homooligomers. Identified in the CTLH complex that contains at least MAEA, RMND5A (or alternatively its paralog RMND5B), GID8, WDR26, and RANBP9 and/or RANBP10. Interacts with DDB1-CUL4A/B E3 ligase complexes.

Its subcellular location is the cytoplasm. It localises to the nucleus. The protein resides in the mitochondrion. In terms of biological role, G-beta-like protein involved in cell signal transduction. Acts as a negative regulator in MAPK signaling pathway. Functions as a scaffolding protein to promote G beta:gamma-mediated PLCB2 plasma membrane translocation and subsequent activation in leukocytes. Core component of the CTLH E3 ubiquitin-protein ligase complex that mediates ubiquitination and subsequent proteasomal degradation of target proteins. Acts as a negative regulator of the canonical Wnt signaling pathway through preventing ubiquitination of beta-catenin CTNNB1 by the beta-catenin destruction complex, thus negatively regulating CTNNB1 degradation. Serves as a scaffold to coordinate PI3K/AKT pathway-driven cell growth and migration. Protects cells from oxidative stress-induced apoptosis via the down-regulation of AP-1 transcriptional activity as well as by inhibiting cytochrome c release from mitochondria. Also protects cells by promoting hypoxia-mediated autophagy and mitophagy. The protein is WD repeat-containing protein 26 (wdr26) of Xenopus tropicalis (Western clawed frog).